Reading from the N-terminus, the 419-residue chain is Mitochondrial chaperone BCS1 (419 aa).

Residues Met-1–Tyr-15 lie on the Mitochondrial intermembrane side of the membrane. Residues Phe-16–Ala-32 form a helical membrane-spanning segment. At Arg-33–Arg-419 the chain is on the mitochondrial matrix side. Residue Tyr-181 is modified to Phosphotyrosine. Gly-230 to Ser-237 serves as a coordination point for ATP.

The protein belongs to the AAA ATPase family. BCS1 subfamily. In terms of assembly, interacts with LETM1.

Its subcellular location is the mitochondrion inner membrane. It catalyses the reaction ATP + H2O = ADP + phosphate + H(+). Its function is as follows. Chaperone necessary for the incorporation of Rieske iron-sulfur protein UQCRFS1 into the mitochondrial respiratory chain complex III. Plays an important role in the maintenance of mitochondrial tubular networks, respiratory chain assembly and formation of the LETM1 complex. The chain is Mitochondrial chaperone BCS1 (BCS1L) from Bos taurus (Bovine).